A 60-amino-acid polypeptide reads, in one-letter code: Antitoxin Dmd (60 aa).

Can form a complex with non-cognate host toxins LsoA and RnlA.

In terms of biological role, antitoxin component of a potential type II toxin-antitoxin (TA) system. Acts as an antitoxin against host toxins RnlA and LsoA, preventing them from degrading T4 bacteriophage-derived mRNA and thus permitting successful virus infection. Stabilizes middle (8-10 minutes) and late (18 to 28 minutes) T4 gene transcripts. The chain is Antitoxin Dmd (dmd) from Escherichia coli (Bacteriophage T4).